Reading from the N-terminus, the 430-residue chain is Serine--tRNA ligase (430 aa).

Residues 44 to 65 (TESLQAERNSRSKSIGAAKARG) form a disordered region. An L-serine-binding site is contributed by 237-239 (TAE). 268-270 (RSE) provides a ligand contact to ATP. Residue E291 participates in L-serine binding. 355-358 (EISS) serves as a coordination point for ATP. S391 lines the L-serine pocket.

This sequence belongs to the class-II aminoacyl-tRNA synthetase family. Type-1 seryl-tRNA synthetase subfamily. Homodimer. The tRNA molecule binds across the dimer.

It is found in the cytoplasm. The enzyme catalyses tRNA(Ser) + L-serine + ATP = L-seryl-tRNA(Ser) + AMP + diphosphate + H(+). The catalysed reaction is tRNA(Sec) + L-serine + ATP = L-seryl-tRNA(Sec) + AMP + diphosphate + H(+). It participates in aminoacyl-tRNA biosynthesis; selenocysteinyl-tRNA(Sec) biosynthesis; L-seryl-tRNA(Sec) from L-serine and tRNA(Sec): step 1/1. In terms of biological role, catalyzes the attachment of serine to tRNA(Ser). Is also able to aminoacylate tRNA(Sec) with serine, to form the misacylated tRNA L-seryl-tRNA(Sec), which will be further converted into selenocysteinyl-tRNA(Sec). The sequence is that of Serine--tRNA ligase from Edwardsiella ictaluri (strain 93-146).